The following is a 565-amino-acid chain: Estrogen receptor gamma (565 aa).

The segment at 1–168 (MAVASSPEKD…TSGGKTDLHY (168 aa)) is modulating. 2 NR C4-type zinc fingers span residues 169-189 (CAVCHDYASGYHYGVWSCEGC) and 205-229 (CPATNECTIDKNRRKSCQACRLRKC). Residues 169 to 234 (CAVCHDYASG…RLRKCYEVGM (66 aa)) constitute a DNA-binding region (nuclear receptor). The segment at 235–285 (TKCGMRKERGNYRSPQMRRMTRLTSQGRTDSSSVLTGSAVVSLNAPQPSAL) is hinge. The region spanning 286–516 (TSEQLIERLM…DLLLEMLDAH (231 aa)) is the NR LBD domain. The disordered stretch occupies residues 522–565 (RLPRRSPEQEPEDQADAPAPPHSSGSGPSYTWTPSSSEGAGEPQ).

This sequence belongs to the nuclear hormone receptor family. NR3 subfamily. As to quaternary structure, homodimer. Abundant in the ovary and testes, barely detectable in the brain and muscle and undetectable in the liver.

It is found in the nucleus. The steroid hormones and their receptors are involved in the regulation of eukaryotic gene expression and affect cellular proliferation and differentiation in target tissues. This Micropogonias undulatus (Atlantic croaker) protein is Estrogen receptor gamma (esr3).